A 310-amino-acid polypeptide reads, in one-letter code: ADP-L-glycero-D-manno-heptose-6-epimerase (310 aa).

NADP(+) is bound by residues 10-11, 31-32, Lys-38, Lys-53, 75-79, and Asn-92; these read FI, DN, and EGACS. Catalysis depends on Tyr-140, which acts as the Proton acceptor. Lys-144 provides a ligand contact to NADP(+). Asn-169 provides a ligand contact to substrate. Residues Val-170 and Lys-178 each coordinate NADP(+). Catalysis depends on Lys-178, which acts as the Proton acceptor. Residues Ser-180, His-187, 201-204, and Arg-209 each bind substrate; that span reads FEGS. At Lys-267 the chain carries N6-acetyllysine. Substrate is bound at residue Tyr-272.

Belongs to the NAD(P)-dependent epimerase/dehydratase family. HldD subfamily. Homopentamer. The cofactor is NADP(+). NAD(+) is required as a cofactor.

The enzyme catalyses ADP-D-glycero-beta-D-manno-heptose = ADP-L-glycero-beta-D-manno-heptose. It participates in nucleotide-sugar biosynthesis; ADP-L-glycero-beta-D-manno-heptose biosynthesis; ADP-L-glycero-beta-D-manno-heptose from D-glycero-beta-D-manno-heptose 7-phosphate: step 4/4. Its pathway is bacterial outer membrane biogenesis; LPS core biosynthesis. With respect to regulation, completely inhibited by ADP and ADP-glucose, and partially inhibited by ATP and NADH. Its function is as follows. Catalyzes the interconversion between ADP-D-glycero-beta-D-manno-heptose and ADP-L-glycero-beta-D-manno-heptose via an epimerization at carbon 6 of the heptose. This is ADP-L-glycero-D-manno-heptose-6-epimerase (hldD) from Escherichia coli (strain K12).